The following is a 657-amino-acid chain: Glycogen debranching enzyme (657 aa).

The active-site Nucleophile is the Asp336. Glu371 (proton donor) is an active-site residue. Basic and acidic residues predominate over residues 458–467 (NEANGEENRD). Residues 458-479 (NEANGEENRDGTNNNYSNNHGK) are disordered.

This sequence belongs to the glycosyl hydrolase 13 family.

It catalyses the reaction Hydrolysis of (1-&gt;6)-alpha-D-glucosidic linkages to branches with degrees of polymerization of three or four glucose residues in limit dextrin.. Its pathway is glycan degradation; glycogen degradation. Functionally, removes maltotriose and maltotetraose chains that are attached by 1,6-alpha-linkage to the limit dextrin main chain, generating a debranched limit dextrin. The polypeptide is Glycogen debranching enzyme (Escherichia coli (strain 55989 / EAEC)).